We begin with the raw amino-acid sequence, 229 residues long: GTP-binding protein Di-Ras3 (229 aa).

Residues 44–51 (GTAGVGKS), 63–69 (RHEYLPT), 91–95 (DSKSG), 152–155 (NKSD), and 182–183 (AK) each bind GTP. Residues 66–74 (YLPTIENTY) carry the Effector region motif. Cysteine 226 is subject to Cysteine methyl ester. The S-geranylgeranyl cysteine moiety is linked to residue cysteine 226. Positions 227 to 229 (IIM) are cleaved as a propeptide — removed in mature form.

Belongs to the small GTPase superfamily. Di-Ras family. Expressed in normal ovarian and breast epithelial cells but not in ovarian and breast cancers.

The protein localises to the cell membrane. The polypeptide is GTP-binding protein Di-Ras3 (DIRAS3) (Homo sapiens (Human)).